A 397-amino-acid polypeptide reads, in one-letter code: Acetate kinase (397 aa).

Asparagine 7 provides a ligand contact to Mg(2+). Lysine 14 provides a ligand contact to ATP. Arginine 90 is a substrate binding site. Aspartate 147 functions as the Proton donor/acceptor in the catalytic mechanism. ATP is bound by residues 207 to 211, 282 to 284, and 330 to 334; these read HLGNG, DFR, and GLGEN. Glutamate 383 lines the Mg(2+) pocket.

The protein belongs to the acetokinase family. Homodimer. The cofactor is Mg(2+). Mn(2+) serves as cofactor.

It is found in the cytoplasm. The enzyme catalyses acetate + ATP = acetyl phosphate + ADP. The protein operates within metabolic intermediate biosynthesis; acetyl-CoA biosynthesis; acetyl-CoA from acetate: step 1/2. Catalyzes the formation of acetyl phosphate from acetate and ATP. Can also catalyze the reverse reaction. This Clostridium botulinum (strain Langeland / NCTC 10281 / Type F) protein is Acetate kinase.